A 289-amino-acid polypeptide reads, in one-letter code: Membrane protein insertase YidC (289 aa).

The first 19 residues, 1–19 (MKKKALLPLLLGIMVFLAG), serve as a signal peptide directing secretion. Cysteine 20 carries N-palmitoyl cysteine lipidation. Cysteine 20 carries the S-diacylglycerol cysteine lipid modification. 5 helical membrane-spanning segments follow: residues 55 to 75 (YGLA…PFML), 133 to 153 (MLGC…FFVL), 177 to 197 (IWIT…STFS), 210 to 230 (MIIS…ALGL), and 231 to 251 (YWSV…AYYS). Residues 268 to 289 (EHGGSGNSKGAKVVSKKNKKKK) form a disordered region.

This sequence belongs to the OXA1/ALB3/YidC family. Type 2 subfamily.

The protein localises to the cell membrane. In terms of biological role, required for the insertion and/or proper folding and/or complex formation of integral membrane proteins into the membrane. Involved in integration of membrane proteins that insert both dependently and independently of the Sec translocase complex, as well as at least some lipoproteins. The polypeptide is Membrane protein insertase YidC (Staphylococcus carnosus (strain TM300)).